Here is a 720-residue protein sequence, read N- to C-terminus: Catalase-peroxidase (720 aa).

Positions 1 to 21 are cleaved as a signal peptide; sequence MSENKCPVMHGSATTTENSMA. A cross-link (tryptophyl-tyrosyl-methioninium (Trp-Tyr) (with M-248)) is located at residues 94–222; the sequence is WHAAGTYRIA…LAAVMMGLIY (129 aa). Residue His-95 is the Proton acceptor of the active site. The tryptophyl-tyrosyl-methioninium (Tyr-Met) (with W-94) cross-link spans 222–248; sequence YVNPEGVDGKPDPLKTAQDIRETFARM. Residue His-263 participates in heme b binding.

It belongs to the peroxidase family. Peroxidase/catalase subfamily. Homodimer or homotetramer. Heme b is required as a cofactor. Formation of the three residue Trp-Tyr-Met cross-link is important for the catalase, but not the peroxidase activity of the enzyme.

The catalysed reaction is H2O2 + AH2 = A + 2 H2O. It carries out the reaction 2 H2O2 = O2 + 2 H2O. Bifunctional enzyme with both catalase and broad-spectrum peroxidase activity. The sequence is that of Catalase-peroxidase from Shewanella denitrificans (strain OS217 / ATCC BAA-1090 / DSM 15013).